The following is a 271-amino-acid chain: 5-deoxy-glucuronate isomerase (271 aa).

This sequence belongs to the isomerase IolB family.

The catalysed reaction is 5-deoxy-D-glucuronate = 5-dehydro-2-deoxy-D-gluconate. It participates in polyol metabolism; myo-inositol degradation into acetyl-CoA; acetyl-CoA from myo-inositol: step 4/7. In terms of biological role, involved in the isomerization of 5-deoxy-glucuronate (5DG) to 5-dehydro-2-deoxy-D-gluconate (DKG or 2-deoxy-5-keto-D-gluconate). The protein is 5-deoxy-glucuronate isomerase of Shouchella clausii (strain KSM-K16) (Alkalihalobacillus clausii).